The chain runs to 238 residues: tRNA (guanine-N(7)-)-methyltransferase (238 aa).

Glutamate 68, glutamate 93, aspartate 120, and aspartate 143 together coordinate S-adenosyl-L-methionine. Residue aspartate 143 is part of the active site. Residues lysine 147, aspartate 179, and 216 to 219 (TKFE) contribute to the substrate site.

It belongs to the class I-like SAM-binding methyltransferase superfamily. TrmB family.

It catalyses the reaction guanosine(46) in tRNA + S-adenosyl-L-methionine = N(7)-methylguanosine(46) in tRNA + S-adenosyl-L-homocysteine. Its pathway is tRNA modification; N(7)-methylguanine-tRNA biosynthesis. In terms of biological role, catalyzes the formation of N(7)-methylguanine at position 46 (m7G46) in tRNA. The chain is tRNA (guanine-N(7)-)-methyltransferase from Shewanella baltica (strain OS155 / ATCC BAA-1091).